The chain runs to 320 residues: V-set and transmembrane domain-containing protein 4 (320 aa).

Residues 1-23 form the signal peptide; the sequence is MRLLALAAAALLARAPAPEVCAA. Residues 24–155 enclose the Ig-like domain; sequence LNVTVSPGPV…SSATEMRVIS (132 aa). Over 24 to 180 the chain is Extracellular; it reads LNVTVSPGPV…WAFFEDLYVY (157 aa). N-linked (GlcNAc...) asparagine glycans are attached at residues N25, N41, N89, and N144. C46 and C127 form a disulfide bridge. A helical membrane pass occupies residues 181-201; that stretch reads AVLVCCVGILSILLFMLVIVW. Residues 202-320 are Cytoplasmic-facing; it reads QSVFNKRKSR…AQILFEENKL (119 aa).

Post-translationally, proteolytically cleaved to generate a bioactive peptide.

Its subcellular location is the secreted. It localises to the cell membrane. Its function is as follows. Peptide Lv enhances L-type voltage-gated calcium channel (L-VGCC) currents in retinal photoreceptors. The polypeptide is V-set and transmembrane domain-containing protein 4 (VSTM4) (Homo sapiens (Human)).